A 383-amino-acid polypeptide reads, in one-letter code: Histidinol-phosphate aminotransferase (383 aa).

Lysine 240 carries the post-translational modification N6-(pyridoxal phosphate)lysine.

The protein belongs to the class-II pyridoxal-phosphate-dependent aminotransferase family. Histidinol-phosphate aminotransferase subfamily. As to quaternary structure, homodimer. Pyridoxal 5'-phosphate serves as cofactor.

It carries out the reaction L-histidinol phosphate + 2-oxoglutarate = 3-(imidazol-4-yl)-2-oxopropyl phosphate + L-glutamate. It participates in amino-acid biosynthesis; L-histidine biosynthesis; L-histidine from 5-phospho-alpha-D-ribose 1-diphosphate: step 7/9. In Oleidesulfovibrio alaskensis (strain ATCC BAA-1058 / DSM 17464 / G20) (Desulfovibrio alaskensis), this protein is Histidinol-phosphate aminotransferase.